A 116-amino-acid chain; its full sequence is Vitelline membrane protein Vm32E (116 aa).

The first 17 residues, 1–17 (MQIVALTLVAFVAIAGA), serve as a signal peptide directing secretion. The VM domain occupies 36 to 73 (GYPAPPCPTNYLFSCQPNLAPAPCAQEAPAYGSAGAYT).

It belongs to the vitelline membrane family. In terms of processing, sulfated by pip; may be involved in embryo dorsal-ventral axis determination. Sulfation by pip may occur on covalently bound glycosaminoglycans. In terms of tissue distribution, expressed in stage 10 egg-chambers, localized in the outer eggshell (chorion membrane).

The protein localises to the secreted. Its function is as follows. Major early eggshell protein. The sequence is that of Vitelline membrane protein Vm32E from Drosophila melanogaster (Fruit fly).